The sequence spans 109 residues: Large ribosomal subunit protein uL22 (109 aa).

This sequence belongs to the universal ribosomal protein uL22 family. Part of the 50S ribosomal subunit.

Its function is as follows. This protein binds specifically to 23S rRNA; its binding is stimulated by other ribosomal proteins, e.g. L4, L17, and L20. It is important during the early stages of 50S assembly. It makes multiple contacts with different domains of the 23S rRNA in the assembled 50S subunit and ribosome. Functionally, the globular domain of the protein is located near the polypeptide exit tunnel on the outside of the subunit, while an extended beta-hairpin is found that lines the wall of the exit tunnel in the center of the 70S ribosome. This is Large ribosomal subunit protein uL22 from Methylobacillus flagellatus (strain ATCC 51484 / DSM 6875 / VKM B-1610 / KT).